We begin with the raw amino-acid sequence, 452 residues long: Trigger factor (452 aa).

Residues 162–247 (GDTVTIDYKG…IHEVKSKQLP (86 aa)) enclose the PPIase FKBP-type domain. A disordered region spans residues 427–452 (AKAKLEAKEAEEAEDKEEAEDKKENK).

The protein belongs to the FKBP-type PPIase family. Tig subfamily.

Its subcellular location is the cytoplasm. It catalyses the reaction [protein]-peptidylproline (omega=180) = [protein]-peptidylproline (omega=0). Functionally, involved in protein export. Acts as a chaperone by maintaining the newly synthesized protein in an open conformation. Functions as a peptidyl-prolyl cis-trans isomerase. The chain is Trigger factor from Lactobacillus helveticus (strain DPC 4571).